The following is a 763-amino-acid chain: Palmitoyltransferase AKR1 (763 aa).

Residues methionine 1–serine 15 show a composition bias toward polar residues. The tract at residues methionine 1 to leucine 59 is disordered. At methionine 1–lysine 307 the chain is on the cytoplasmic side. ANK repeat units lie at residues proline 57 to serine 87, glutamate 92 to serine 121, leucine 126 to threonine 155, glutamine 159 to isoleucine 188, lysine 197 to isoleucine 226, glycine 230 to glutamine 259, and asparagine 292 to phenylalanine 322. The chain crosses the membrane as a helical span at residues isoleucine 308–phenylalanine 325. Topologically, residues serine 326–isoleucine 330 are lumenal. The helical transmembrane segment at leucine 331–isoleucine 348 threads the bilayer. Topologically, residues lysine 349–lysine 368 are cytoplasmic. A helical transmembrane segment spans residues serine 369–leucine 389. The Lumenal segment spans residues arginine 390–leucine 401. Residues glycine 402–phenylalanine 422 traverse the membrane as a helical segment. The Cytoplasmic segment spans residues serine 423–lysine 497. Residues serine 454–leucine 504 enclose the DHHC domain. The active-site S-palmitoyl cysteine intermediate is cysteine 484. A helical transmembrane segment spans residues leucine 498–leucine 518. The Lumenal portion of the chain corresponds to lysine 519–arginine 546. Residues phenylalanine 547–isoleucine 567 traverse the membrane as a helical segment. Residues valine 568–valine 763 lie on the Cytoplasmic side of the membrane.

The protein belongs to the DHHC palmitoyltransferase family. AKR/ZDHHC17 subfamily.

Its subcellular location is the early endosome membrane. The protein resides in the golgi apparatus membrane. The enzyme catalyses L-cysteinyl-[protein] + hexadecanoyl-CoA = S-hexadecanoyl-L-cysteinyl-[protein] + CoA. Its function is as follows. Palmitoyltransferase specific for casein kinase 1. In Candida glabrata (strain ATCC 2001 / BCRC 20586 / JCM 3761 / NBRC 0622 / NRRL Y-65 / CBS 138) (Yeast), this protein is Palmitoyltransferase AKR1 (AKR1).